Reading from the N-terminus, the 559-residue chain is 2-succinyl-5-enolpyruvyl-6-hydroxy-3-cyclohexene-1-carboxylate synthase (559 aa).

This sequence belongs to the TPP enzyme family. MenD subfamily. In terms of assembly, homodimer. Mg(2+) is required as a cofactor. The cofactor is Mn(2+). It depends on thiamine diphosphate as a cofactor.

It catalyses the reaction isochorismate + 2-oxoglutarate + H(+) = 5-enolpyruvoyl-6-hydroxy-2-succinyl-cyclohex-3-ene-1-carboxylate + CO2. Its pathway is quinol/quinone metabolism; 1,4-dihydroxy-2-naphthoate biosynthesis; 1,4-dihydroxy-2-naphthoate from chorismate: step 2/7. The protein operates within quinol/quinone metabolism; menaquinone biosynthesis. Its function is as follows. Catalyzes the thiamine diphosphate-dependent decarboxylation of 2-oxoglutarate and the subsequent addition of the resulting succinic semialdehyde-thiamine pyrophosphate anion to isochorismate to yield 2-succinyl-5-enolpyruvyl-6-hydroxy-3-cyclohexene-1-carboxylate (SEPHCHC). The polypeptide is 2-succinyl-5-enolpyruvyl-6-hydroxy-3-cyclohexene-1-carboxylate synthase (Edwardsiella ictaluri (strain 93-146)).